The following is a 1350-amino-acid chain: MDALLPRSSPQLKFYLNGTPISLTSPHPRWTLLDFIRSQDGLKGTKLGCGEGGCGALSGKHVITIEGLGTVDHPHPLQERIAQLHGSQCGFCTPGIVMSLYAMIRNAYDPVTGKFQLSADDIESKGHLDGNLCRCTGYKPILNAARTFIEDDLGSVPSIVESELVGTEEETESDMGAHSGSGDTGSRSSGSCGRPGGCCKDSPGISSCSSRETDMTTPSLPDSPVLKQYDFIPYTPTTELIYPPGLAKFVPELLCYGDAEQAWVKPRSVQEALEILSQCPSATLVTGASEVQVDVRFKDFRPSVSVFVGDITEMTGISWSEDMKTLYIGGSASLSDIEAECLRCIPLLKAVNLGSESVLSAIARTLRYFAGRQIRNAACLAGNIATASPISDMNPLLLAVGATVHARTSAEETTIPMSEMFKGYRKTALPSGSLITKIAVPMPSKDQIEIVNAYKQAKRKDDDIAIVTAAFRVRIAPGPDYTVQEASLAFGGMAPTTVLAHKTASALEGKRWGDEAVLDIVLTSLGEEFNLPYSVPGGMATYRRTLTLSLFVRFWNYVNQKLGLEYDSDLIEEIHRGISTGTRDDDNPHAQRVVGQQIPHLSGLKHATGEAEYVDDMPPLHRELHGALVLSERAHAKILSVNWTPALERGAVGYVDHTSLPEEKNHWGPVVHDEPVFAKGEVHAHGQPIGLVYADDAMTAQIAAKAVIVTYEDLPAILTIDEAIEARSFFNYGKELRRGAPPEEIRKELDDCEYTLSGTTKIGGQEHFYLETNAAIAVPHTEDGSMDVWSSTQNTMETQDFLSQVTNVPRHKINARVRRMGGAFGGKESRSVPIACIVAVAAKKARRPVRIMLNRDEDMMTSGQRHPVQCRWKVGFNREGKLLVLDADTYNNAGYSVDMSAAVMDRCLTHIENCYYIPNVWLRGWVCKTNTHSNTAFRGFGAPQAMYITESIISAVAEKVGIDVDEIRRRNLYQVGQRTPFNQVLDEDWHVPLLLEQVREEADYDARKKEIERFNSEHRWRKRGIALIPTKFGISFATALHLNQASAAVRVYTDGSVLLNHGGTEMGQGLYTKMVQVAAQELRVPVDQVYTQDTSSYQTANASPTAASSGSDLNGMAIKHACDQINERLRPYREKYGEDADLGTIAKAAYRDRVNLSAAGYYKMPTIGYEWGNYSENVKPMYFYFTQRQGVACTEVELDLLTGTHTVLRADLKMDIGRSINPAIDYGQIEGAFVQGQGLFTMEESLWTRSGQLATRGPGTYKIPGFADIPQVFNSSKGIGEPPLFMGSSVLFALRDALSHARRERGVSEPLVLDSPATVERLRLAVGDDLVHRAQVQRKDGEQGFFVAVA.

[2Fe-2S] cluster-binding residues include Cys-49, Cys-54, Cys-89, Cys-92, Cys-133, and Cys-135. Positions 164–193 (LVGTEEETESDMGAHSGSGDTGSRSSGSCG) are disordered. Over residues 180-192 (GSGDTGSRSSGSC) the composition is skewed to low complexity. Positions 256 to 445 (YGDAEQAWVK…TKIAVPMPSK (190 aa)) constitute an FAD-binding PCMH-type domain. Residues 284 to 291 (LVTGASEV), 379 to 383 (CLAGN), Asp-392, and Lys-455 each bind FAD. Gln-793 and Phe-824 together coordinate Mo-molybdopterin. Residues Glu-828 and Arg-906 each coordinate substrate. The Mo-molybdopterin site is built by Arg-938 and Ala-1107. The active-site Proton acceptor is Glu-1281.

The protein belongs to the xanthine dehydrogenase family. Requires [2Fe-2S] cluster as cofactor. FAD serves as cofactor. It depends on Mo-molybdopterin as a cofactor.

With respect to regulation, allopurinol inhibits catalytic activity in a linear fashion. Nicotinate hydroxylase, part of the hnx cluster involved in the purine degradation. The nicotinate hydroxylase hnxS accepts nicotinate as a substrate and catalyzes the first step of nicotinate catabolism. HnxS also accepts hypoxanthine, but not xanthine, as a substrate. The major facilitator-type transporters hxnP and hxnZ are probably involved in the uptake of nicotinate-derived metabolites, and the oxidoreductases hxnT and hxnY in the further metabolism of 6-OH nicotinic acid. This is Nicotinate hydroxylase hnxS from Emericella nidulans (strain FGSC A4 / ATCC 38163 / CBS 112.46 / NRRL 194 / M139) (Aspergillus nidulans).